We begin with the raw amino-acid sequence, 430 residues long: Adenylosuccinate synthetase (430 aa).

GTP is bound by residues 12–18 (GDEGKGK) and 40–42 (GHT). The Proton acceptor role is filled by Asp-13. Mg(2+)-binding residues include Asp-13 and Gly-40. IMP contacts are provided by residues 13–16 (DEGK), 38–41 (NAGH), Thr-130, Arg-144, Gln-224, Thr-239, and Arg-303. His-41 functions as the Proton donor in the catalytic mechanism. 299-305 (VVTGRKR) lines the substrate pocket. GTP is bound by residues Arg-305, 331 to 333 (KLD), and 413 to 415 (STS).

This sequence belongs to the adenylosuccinate synthetase family. In terms of assembly, homodimer. Requires Mg(2+) as cofactor.

The protein localises to the cytoplasm. The enzyme catalyses IMP + L-aspartate + GTP = N(6)-(1,2-dicarboxyethyl)-AMP + GDP + phosphate + 2 H(+). Its pathway is purine metabolism; AMP biosynthesis via de novo pathway; AMP from IMP: step 1/2. Functionally, plays an important role in the de novo pathway of purine nucleotide biosynthesis. Catalyzes the first committed step in the biosynthesis of AMP from IMP. The polypeptide is Adenylosuccinate synthetase (Methylobacterium nodulans (strain LMG 21967 / CNCM I-2342 / ORS 2060)).